A 689-amino-acid polypeptide reads, in one-letter code: Elongation factor G (689 aa).

Positions 8–282 (DKVRNIGIMA…AIVRYLPSPL (275 aa)) constitute a tr-type G domain. GTP-binding positions include 17–24 (AHIDAGKT), 81–85 (DTPGH), and 135–138 (NKMD).

Belongs to the TRAFAC class translation factor GTPase superfamily. Classic translation factor GTPase family. EF-G/EF-2 subfamily.

It localises to the cytoplasm. Its function is as follows. Catalyzes the GTP-dependent ribosomal translocation step during translation elongation. During this step, the ribosome changes from the pre-translocational (PRE) to the post-translocational (POST) state as the newly formed A-site-bound peptidyl-tRNA and P-site-bound deacylated tRNA move to the P and E sites, respectively. Catalyzes the coordinated movement of the two tRNA molecules, the mRNA and conformational changes in the ribosome. This Thermoanaerobacter pseudethanolicus (strain ATCC 33223 / 39E) (Clostridium thermohydrosulfuricum) protein is Elongation factor G.